A 180-amino-acid chain; its full sequence is Nucleoplasmin-3 (180 aa).

Residue Ala-2 is modified to N-acetylalanine. 2 positions are modified to phosphoserine: Ser-13 and Ser-16. An Omega-N-methylarginine modification is found at Arg-27. The segment at 141 to 180 is disordered; the sequence is TMSNDVSEEESEEEEEEEDSDEEEAELCPILPAKKQGGRP. Residues 146–166 show a composition bias toward acidic residues; sequence VSEEESEEEEEEEDSDEEEAE. 3 positions are modified to phosphoserine: Ser-147, Ser-151, and Ser-160.

This sequence belongs to the nucleoplasmin family. Interacts with NPM (via N-terminus). Forms a pentamer with NPM at a ratio 4:1 (NPM3/NPM). Two pentamers form a decamer. Phosphorylated.

It localises to the nucleus. It is found in the nucleolus. Functionally, plays a role in the regulation of diverse cellular processes such as ribosome biogenesis, chromatin remodeling or protein chaperoning. Modulates the histone chaperone function and the RNA-binding activity of nucleolar phosphoprotein B23/NPM. Efficiently mediates chromatin remodeling when included in a pentamer containing NPM3 and NPM. This is Nucleoplasmin-3 (NPM3) from Pongo abelii (Sumatran orangutan).